Reading from the N-terminus, the 66-residue chain is Large ribosomal subunit protein bL33c (66 aa).

Belongs to the bacterial ribosomal protein bL33 family.

The protein resides in the plastid. Its subcellular location is the chloroplast. The polypeptide is Large ribosomal subunit protein bL33c (Liriodendron tulipifera (Tuliptree)).